A 349-amino-acid polypeptide reads, in one-letter code: Twinfilin-2-A (349 aa).

2 ADF-H domains span residues 4 to 139 and 177 to 313; these read QTGI…KHVS and GLSF…DEVH. The segment at 321 to 349 is disordered; the sequence is QAFAKPKGPAGKRGQKRLIKGPGENGEDS.

It belongs to the actin-binding proteins ADF family. Twinfilin subfamily. In terms of assembly, interacts with G-actin; ADP-actin form and capping protein (CP).

Its subcellular location is the cytoplasm. It is found in the cytoskeleton. The protein localises to the perinuclear region. Its function is as follows. Actin-binding protein involved in motile and morphological processes. Inhibits actin polymerization, likely by sequestering G-actin. The protein is Twinfilin-2-A (twf2-a) of Xenopus laevis (African clawed frog).